A 118-amino-acid polypeptide reads, in one-letter code: uncharacterized protein (118 aa).

This is an uncharacterized protein from Sulfolobus islandicus filamentous virus (isolate Iceland/Hveragerdi) (SIFV).